A 164-amino-acid polypeptide reads, in one-letter code: UPF0561 protein C2orf68 homolog (164 aa).

2 stretches are compositionally biased toward basic and acidic residues: residues 1–13 (MEVIRDGEGESVK) and 35–49 (IARDDYDREVKQAKE). The tract at residues 1–98 (MEVIRDGEGE…WNESSSGTEM (98 aa)) is disordered. A compositionally biased stretch (basic residues) spans 50-64 (KQRRRHTNTPRRPRR).

The protein belongs to the UPF0561 family.

In Danio rerio (Zebrafish), this protein is UPF0561 protein C2orf68 homolog.